The chain runs to 536 residues: Probable galacturonosyltransferase 10 (536 aa).

The Cytoplasmic portion of the chain corresponds to 1 to 16 (MRRRGGDSFRRAGRRK). The helical; Signal-anchor for type II membrane protein transmembrane segment at 17–37 (ISNVVWWVLSGIALLLFFLIL) threads the bilayer. The Lumenal portion of the chain corresponds to 38 to 536 (SKAGHIEPRP…SPFMQQCNFH (499 aa)). Asn64, Asn246, Asn300, Asn403, and Asn436 each carry an N-linked (GlcNAc...) asparagine glycan.

This sequence belongs to the glycosyltransferase 8 family. Expressed in roots, inflorescences, siliques, leaves and stems.

It is found in the golgi apparatus membrane. It functions in the pathway glycan metabolism; pectin biosynthesis. Its function is as follows. May be involved in pectin and/or xylans biosynthesis in cell walls. The chain is Probable galacturonosyltransferase 10 (GAUT10) from Arabidopsis thaliana (Mouse-ear cress).